Here is a 283-residue protein sequence, read N- to C-terminus: ATP synthase gamma chain (283 aa).

This sequence belongs to the ATPase gamma chain family. In terms of assembly, F-type ATPases have 2 components, CF(1) - the catalytic core - and CF(0) - the membrane proton channel. CF(1) has five subunits: alpha(3), beta(3), gamma(1), delta(1), epsilon(1). CF(0) has three main subunits: a, b and c.

It localises to the cell membrane. Functionally, produces ATP from ADP in the presence of a proton gradient across the membrane. The gamma chain is believed to be important in regulating ATPase activity and the flow of protons through the CF(0) complex. This Exiguobacterium sibiricum (strain DSM 17290 / CCUG 55495 / CIP 109462 / JCM 13490 / 255-15) protein is ATP synthase gamma chain.